The chain runs to 104 residues: uncharacterized protein (104 aa).

It to A.aeolicus AQ_377.

This is an uncharacterized protein from Archaeoglobus fulgidus (strain ATCC 49558 / DSM 4304 / JCM 9628 / NBRC 100126 / VC-16).